The following is a 564-amino-acid chain: Formate--tetrahydrofolate ligase (564 aa).

69–76 contacts ATP; sequence TPAGEGKS.

This sequence belongs to the formate--tetrahydrofolate ligase family.

The enzyme catalyses (6S)-5,6,7,8-tetrahydrofolate + formate + ATP = (6R)-10-formyltetrahydrofolate + ADP + phosphate. The protein operates within one-carbon metabolism; tetrahydrofolate interconversion. The chain is Formate--tetrahydrofolate ligase from Renibacterium salmoninarum (strain ATCC 33209 / DSM 20767 / JCM 11484 / NBRC 15589 / NCIMB 2235).